A 698-amino-acid chain; its full sequence is PWWP domain-containing DNA repair factor 3A (698 aa).

2 disordered regions span residues 102–145 (TSLS…EDDQ) and 159–386 (CSPK…EEPP). Position 105 is a phosphoserine (Ser-105). Over residues 129–139 (SQVSSAPSPSF) the composition is skewed to polar residues. Residues Ser-165, Ser-168, and Ser-170 each carry the phosphoserine modification. Polar residues predominate over residues 200-211 (DESQNGSGSQLD). 2 stretches are compositionally biased toward basic and acidic residues: residues 212 to 235 (HGQE…RGKA) and 341 to 350 (RAGDSDRPEE). Phosphoserine occurs at positions 355 and 356. Positions 370 to 384 (EEEEEEEEEEEEEEE) are enriched in acidic residues. In terms of domain architecture, PWWP spans 399-460 (VGMLVWLKYQ…KHFDCKEKHA (62 aa)).

This sequence belongs to the PWWP3A family. As to quaternary structure, interacts with TP53BP1 (via BRCT domain); the interaction is not dependent on its phosphorylation status. Binds nucleosomes. Interacts with trimethylated 'Lys-36' of histone H3 (H3K36me3) (in vitro).

It localises to the nucleus. Its function is as follows. Involved in the DNA damage response pathway by contributing to the maintenance of chromatin architecture. Recruited to the vicinity of DNA breaks by TP53BP1 and plays an accessory role to facilitate damage-induced chromatin changes and promoting chromatin relaxation. Required for efficient DNA repair and cell survival following DNA damage. The sequence is that of PWWP domain-containing DNA repair factor 3A from Rattus norvegicus (Rat).